Here is a 64-residue protein sequence, read N- to C-terminus: Small ribosomal subunit protein bS21 (64 aa).

Residues 37 to 64 (EKPSVKRKRKEKEAQRRLRKKMRMMKKA) form a disordered region. The segment covering 53-64 (RLRKKMRMMKKA) has biased composition (basic residues).

Belongs to the bacterial ribosomal protein bS21 family.

In Syntrophotalea carbinolica (strain DSM 2380 / NBRC 103641 / GraBd1) (Pelobacter carbinolicus), this protein is Small ribosomal subunit protein bS21.